The chain runs to 118 residues: MAWSSLLLTLLAHCTGSWAQSVLTQPPSVSGAPGQRVTISCTGSSSNIGAGYVVHWYQQLPGTAPKLLIYGNSNRPSGVPDQFSGSKSGTSASLAITGLQSEDEADYYCKAWDNSLNA.

Residues 1-19 form the signal peptide; the sequence is MAWSSLLLTLLAHCTGSWA. The framework-1 stretch occupies residues 20–44; the sequence is QSVLTQPPSVSGAPGQRVTISCTGS. One can recognise an Ig-like domain in the interval 20–118; it reads QSVLTQPPSV…CKAWDNSLNA (99 aa). A disulfide bridge links Cys41 with Cys109. The tract at residues 45–53 is complementarity-determining-1; sequence SSNIGAGYV. The framework-2 stretch occupies residues 54–70; sequence VHWYQQLPGTAPKLLIY. A complementarity-determining-2 region spans residues 71–73; sequence GNS. A framework-3 region spans residues 74 to 109; it reads NRPSGVPDQFSGSKSGTSASLAITGLQSEDEADYYC. The tract at residues 110 to 118 is complementarity-determining-3; that stretch reads KAWDNSLNA.

In terms of assembly, immunoglobulins are composed of two identical heavy chains and two identical light chains; disulfide-linked.

The protein resides in the secreted. It localises to the cell membrane. Probable non-functional open reading frame (ORF) of V region of the variable domain of immunoglobulin light chains. Non-functional ORF generally cannot participate in the synthesis of a productive immunoglobulin chain due to altered V-(D)-J or switch recombination and/or splicing site (at mRNA level) and/or conserved amino acid change (protein level). Immunoglobulins, also known as antibodies, are membrane-bound or secreted glycoproteins produced by B lymphocytes. In the recognition phase of humoral immunity, the membrane-bound immunoglobulins serve as receptors which, upon binding of a specific antigen, trigger the clonal expansion and differentiation of B lymphocytes into immunoglobulins-secreting plasma cells. Secreted immunoglobulins mediate the effector phase of humoral immunity, which results in the elimination of bound antigens. The antigen binding site is formed by the variable domain of one heavy chain, together with that of its associated light chain. Thus, each immunoglobulin has two antigen binding sites with remarkable affinity for a particular antigen. The variable domains are assembled by a process called V-(D)-J rearrangement and can then be subjected to somatic hypermutations which, after exposure to antigen and selection, allow affinity maturation for a particular antigen. The polypeptide is Probable non-functional immunoglobulin lambda variable 1-50 (Homo sapiens (Human)).